Consider the following 1065-residue polypeptide: Cellulose synthase A catalytic subunit 3 [UDP-forming] (1065 aa).

Residues 1–260 (MESEGETAGK…PSSRINPYRM (260 aa)) lie on the Cytoplasmic side of the membrane. Position 3 is a phosphoserine (Ser3). Residues Cys20, Cys23, Cys39, Cys42, Cys47, Cys50, Cys62, and Cys65 each coordinate Zn(2+). The segment at 20 to 66 (CQICSDNVGKTVDGDRFVACDICSFPVCRPCYEYERKDGNQSCPQCK) adopts an RING-type; degenerate zinc-finger fold. Phosphoserine is present on residues Ser151, Ser211, and Ser216. The helical transmembrane segment at 261 to 281 (VIMLRLVILCLFLHYRITNPV) threads the bilayer. The Extracellular segment spans residues 282-283 (PN). The helical transmembrane segment at 284-304 (AFALWLVSVICEIWFALSWIL) threads the bilayer. Over 305–842 (DQFPKWFPVN…LERFAYVNTT (538 aa)) the chain is Cytoplasmic. Positions 343, 349, 350, and 379 each coordinate UDP-alpha-D-glucose. Asp379 is an active-site residue. The stretch at 433-457 (VKDRRAMKREYEEFKIRINALVSKA) forms a coiled coil. A UDP-alpha-D-glucose-binding site is contributed by Lys520. Mn(2+) contacts are provided by Lys521 and Asp545. The disordered stretch occupies residues 643–672 (SKLCGGSRKKNSKAKKESDKKKSGRHTDST). Positions 656-670 (AKKESDKKKSGRHTD) are enriched in basic and acidic residues. Asp765 is an active-site residue. The helical transmembrane segment at 843–863 (IYPITSIPLLMYCTLPAVCLF) threads the bilayer. Residues 864–874 (TNQFIIPQISN) lie on the Extracellular side of the membrane. Residues 875-895 (IASIWFLSLFLSIFATGILEM) traverse the membrane as a helical segment. The Cytoplasmic portion of the chain corresponds to 896–910 (RWSGVGIDEWWRNEQ). Residues 911 to 931 (FWVIGGVSAHLFAVFQGILKV) traverse the membrane as a helical segment. Over 932 to 961 (LAGIDTNFTVTSKASDEDGDFAELYLFKWT) the chain is Extracellular. A glycan (N-linked (GlcNAc...) asparagine) is linked at Asn938. Residues 962–982 (TLLIPPTTLLIVNLVGVVAGV) form a helical membrane-spanning segment. The Cytoplasmic portion of the chain corresponds to 983–993 (SYAINSGYQSW). A helical transmembrane segment spans residues 994–1014 (GPLFGKLFFAFWVIVHLYPFL). Topologically, residues 1015–1023 (KGLMGRQNR) are extracellular. A helical membrane pass occupies residues 1024-1044 (TPTIVVVWSVLLASIFSLLWV). At 1045-1065 (RIDPFTSRVTGPDILECGINC) the chain is on the cytoplasmic side.

The protein belongs to the glycosyltransferase 2 family. Plant cellulose synthase subfamily. Homodimer. Interacts with CESA1 and CESA6. Interacts with STL1 and STL2, but not with GOT1. Binds to CSI1 and CSI3. Interacts with PAT24/TIP1. It depends on Zn(2+) as a cofactor. Mn(2+) serves as cofactor. In terms of processing, palmitoylated, in part by PAT24/TIP1. As to expression, expressed in young plants, flowers and roots, and to a lower extent in leaves and stems. Localized in all cells except meristematic cells. Accumulates particularly in root caps, root hairs, epidermal layer, midveins of leaves and anthers. Not present in old tissues.

Its subcellular location is the cell membrane. The protein localises to the golgi apparatus membrane. The enzyme catalyses [(1-&gt;4)-beta-D-glucosyl](n) + UDP-alpha-D-glucose = [(1-&gt;4)-beta-D-glucosyl](n+1) + UDP + H(+). Its pathway is glycan metabolism; plant cellulose biosynthesis. Catalytic subunit of cellulose synthase terminal complexes ('rosettes'), required for beta-1,4-glucan microfibril crystallization, a major mechanism of the cell wall formation. Involved in the primary cell wall formation, especially in roots. The polypeptide is Cellulose synthase A catalytic subunit 3 [UDP-forming] (Arabidopsis thaliana (Mouse-ear cress)).